Here is a 1055-residue protein sequence, read N- to C-terminus: MKSEDYSYARMAPDIHEERQYRCEECDQLFESKTELSDHQKYPCVTPHSAFSLVENSFPPSLNDDSDLTEMQHTHECKECDQVFPDMQSLEKHLLSHTEEREYKCDQCPKAFNWKSNLIRHQMSHDTGKHYECENCSKQVFTDPSNLQRHIRSQHVGARAHACSDCGKTFATSSGLKQHKHIHSSVKPFVCEVCHKSYTQFSNLCRHKRMHADCRTQIKCKDCGQMFSTTSSLNKHRRFCEGKNHFAAGGLFGQGISLPGTPAMDKASMISMNHANAGLADYFGASRHTAGLTFPTAPGFPFSFPGLFPSSLYHRPPFIPPASPVKGLPGVEQSSKSQSPHVNQPQVLPATQDILKALSKHPSVDENKALEFITESNLNQRPHEKISDHSESSDLDDVSTPSGSDLETTSGSDLESDIESDKDKLKENGKLYKDKMSPLQSLAALNSKREYNNHSVFSPCLEEQTAVTGAVNDSIKAIASIAEKYFGSTGLVGLPDKKGTTLPYPSMFPLPFFPAFSQSMYTFPDRDVRPVPLKIEPESPKETKKVQKGKTESPFDLTTKRKEEKASPNVPSKSGAPTSSNHDQPLDLSMGSRSRAATTKQTEPRKNHIFNEKKDMDPELPKTSEHCLQHARPAPFFMDPIYRVEKRKPMDPLEILKEKYLRPSPGFLFHPQFPMPDQRTWMSAIENMAEKLESFNALKPEANNLIQSVPSMFNFRASSSALPENLLRKGKERYTCRYCGKIFPRSANLTRHLRTHTGEQPYRCKYCDRSFSISSNLQRHVRNIHNKEKPFKCHLCDRCFGQQTNLDRHLKKHENGNLSGTAASSPHSEIEGTGPILDEKEDSYFNEIRNFIGNSSHNKQSPLNSDERINGSHDKIMLAGQNSDILDDDEDEAILDEDDEESDIAVKVMKEPNTSVMLEKCSVDEYEEGGKSEVNSKVSPSRYDDEDDDDDEEEDFKKSLSALDHIRHFTDSLKMRKMDDGQFNDAELSAFTASHLTDDLKHPLYRKSKSQAYAMMLSLSDQESLHPTTHTSSSMWHNLARAAAESTALHSVSHV.

3 C2H2-type zinc fingers span residues 21–48 (YRCE…VTPH), 75–97 (HECK…LLSH), and 103–125 (YKCD…QMSH). The C2H2-type 4; degenerate zinc finger occupies 131–155 (YECENCSKQVFTDPSNLQRHIRSQH). 2 C2H2-type zinc fingers span residues 161-183 (HACS…KHIH) and 189-211 (FVCE…KRMH). Residues 218–240 (IKCKDCGQMFSTTSSLNKHRRFC) form a C2H2-type 7; atypical zinc finger. 3 disordered regions span residues 324-345 (PVKG…VNQP), 372-423 (FITE…SDKD), and 531-621 (VPLK…PELP). Over residues 332–345 (EQSSKSQSPHVNQP) the composition is skewed to polar residues. Residues 381 to 392 (RPHEKISDHSES) are compositionally biased toward basic and acidic residues. Residues 399-413 (STPSGSDLETTSGSD) show a composition bias toward polar residues. A Nuclear localization signal motif is present at residues 422 to 435 (KDKLKENGKLYKDK). Residues 531–566 (VPLKIEPESPKETKKVQKGKTESPFDLTTKRKEEKA) show a composition bias toward basic and acidic residues. Residues 554 to 558 (PFDLT) carry the CTBP-binding motif 1 motif. Over residues 569–583 (NVPSKSGAPTSSNHD) the composition is skewed to polar residues. Residues 585-589 (PLDLS) carry the CTBP-binding motif 2 motif. Residues 591–601 (GSRSRAATTKQ) are compositionally biased toward polar residues. Residues 602-621 (TEPRKNHIFNEKKDMDPELP) show a composition bias toward basic and acidic residues. 3 consecutive C2H2-type zinc fingers follow at residues 734–756 (YTCR…LRTH), 762–785 (YRCK…RNIH), and 791–813 (FKCH…LKKH). 2 disordered regions span residues 813 to 837 (HENG…GPIL) and 922 to 957 (SVDE…EDFK). Over residues 816–827 (GNLSGTAASSPH) the composition is skewed to polar residues. The span at 944–954 (DDEDDDDDEEE) shows a compositional bias: acidic residues.

Homooligomer. Interacts with ctbp. As to expression, expressed dynamically during embryonic development; in the developing pronephros, specific areas of the brain (forebrain, midbrain and hindbrain), and in the majority of the visceral arch, and head mesenchyme derived from neural crest cells. Within the pronephros, expressed in the ventroposterior region of the pronephros anlagen from stage 20 (and is absent from the splanchnic layer that forms the glomus), then expression becomes restricted to the distal tubule and duct by the tadpole stage. In adults, expressed in various tissues including kidney, lung, testis, spleen and stomach.

The protein localises to the nucleus. It localises to the nucleus speckle. Its function is as follows. Transcriptional repressor during pronephros development. Plays a role in regionalization of the pronephros; may promote formation of the distal tubule and duct over formation of the glomus and proximal tubule. The polypeptide is MDS1 and EVI1 complex locus protein EVI1-A (mecom-a) (Xenopus laevis (African clawed frog)).